The primary structure comprises 156 residues: MPRRREVAKRVILPDPKYNDRTVAKFINAIMLMGKKSTAEGIVYGAFDLIAERSGEEALDVFKKAVENIRPMLEVKSRRVGGSTYQVPVEVRADRRNALAIRWLILYARGRGEKTMVERLAGELLDAAANRGAAVKKREDTHRMAEANKAFAHYRW.

The protein belongs to the universal ribosomal protein uS7 family. Part of the 30S ribosomal subunit. Contacts proteins S9 and S11.

One of the primary rRNA binding proteins, it binds directly to 16S rRNA where it nucleates assembly of the head domain of the 30S subunit. Is located at the subunit interface close to the decoding center, probably blocks exit of the E-site tRNA. The polypeptide is Small ribosomal subunit protein uS7 (Syntrophotalea carbinolica (strain DSM 2380 / NBRC 103641 / GraBd1) (Pelobacter carbinolicus)).